A 523-amino-acid polypeptide reads, in one-letter code: 3-hydroxybenzoate--CoA ligase (523 aa).

This sequence belongs to the ATP-dependent AMP-binding enzyme family. Benzoate-CoA ligase subfamily.

It carries out the reaction 3-hydroxybenzoate + ATP + CoA = 3-hydroxybenzoyl-CoA + AMP + diphosphate. The catalysed reaction is 4-hydroxybenzoate + ATP + CoA = 4-hydroxybenzoyl-CoA + AMP + diphosphate. In terms of biological role, ligase involved in the anaerobic degradation of 3-hydroxybenzoate (3OHBz). Catalyzes the activation of 3-hydroxybenzoate to 3-hydroxybenzoyl-CoA. Also shows high activity with protocatechuate and 4-hydroxybenzoate. Exhibits lower activity with benzoate, but cannot use 2-hydroxybenzoate or benzoate analogs containing other substituents at the ortho position, such as 2-aminobenzoate (anthranilate). This is 3-hydroxybenzoate--CoA ligase from Aromatoleum sp. (strain CIB) (Azoarcus sp. (strain CIB)).